Reading from the N-terminus, the 606-residue chain is Pro-secreted protein ORF2 (606 aa).

A signal peptide spans 1–19 (MSLCRLLLMLAMCCGVSRG). The disordered stretch occupies residues 22–54 (TLPAGGRRGQRRRDNSAQWSTQQRPEGAVGPAP). Residues 28-34 (RRGQRRR) carry the Nuclear localization signal motif. A glycan (N-linked (GlcNAc...) asparagine; by host) is linked at Asn255. Positions 313 to 339 (ILGVLFNLADTVLGGLPSTLLRAASGQ) are particle formation. The N-linked (GlcNAc...) asparagine; by host glycan is linked to Asn510.

It belongs to the hepevirus capsid protein family. Homodimer. As to quaternary structure, self-assembles to form the capsid. The capsid is dominated by dimers that define the 30 morphological units. Interacts with phosphorylated protein ORF3. Post-translationally, N-glycosylated.

The protein resides in the secreted. Its subcellular location is the virion. The protein localises to the host cytoplasm. It is found in the host endoplasmic reticulum. It localises to the host Golgi apparatus. The protein resides in the host cell surface. Its subcellular location is the host nucleus. In terms of biological role, plays a role in the inhibition of host antibody-mediated neutralization without blocking viral cell entry. Forms an icosahedral capsid with a T=1 symmetry and a 34 nm diameter. The capsid is composed of 60 copies linked to each other. Binds to the 5' end of the genomic RNA to mediate genome encapsidation. This Gallus gallus (Chicken) protein is Pro-secreted protein ORF2.